The following is a 487-amino-acid chain: NAD(+)--arginine ADP-ribosyltransferase EFV (487 aa).

Residues Ser2–Leu51 adopt a coiled-coil conformation. Residues Leu315 to Gly487 form the TR mART core domain. NAD(+) is bound by residues Thr346–Arg358 and Arg394–Glu400. Residues Arg394, Ser415, and Glu463 contribute to the active site. An NAD(+)-binding site is contributed by Glu463.

It localises to the secreted. The enzyme catalyses L-arginyl-[protein] + NAD(+) = N(omega)-(ADP-D-ribosyl)-L-arginyl-[protein] + nicotinamide + H(+). Functionally, a probable mono(ADP-ribosyl)transferase, it may ADP-ribosylate Arg in target protein(s). Upon expression in yeast cells causes cell death. The polypeptide is NAD(+)--arginine ADP-ribosyltransferase EFV (Enterococcus faecalis (strain ATCC 700802 / V583)).